The primary structure comprises 504 residues: Histidine ammonia-lyase (504 aa).

A cross-link (5-imidazolinone (Ala-Gly)) is located at residues alanine 141–glycine 143. Serine 142 carries the 2,3-didehydroalanine (Ser) modification.

The protein belongs to the PAL/histidase family. In terms of processing, contains an active site 4-methylidene-imidazol-5-one (MIO), which is formed autocatalytically by cyclization and dehydration of residues Ala-Ser-Gly.

It is found in the cytoplasm. The catalysed reaction is L-histidine = trans-urocanate + NH4(+). It participates in amino-acid degradation; L-histidine degradation into L-glutamate; N-formimidoyl-L-glutamate from L-histidine: step 1/3. This Geobacillus kaustophilus (strain HTA426) protein is Histidine ammonia-lyase.